A 56-amino-acid chain; its full sequence is Large ribosomal subunit protein bL33c (56 aa).

It belongs to the bacterial ribosomal protein bL33 family.

The protein resides in the plastid. It is found in the chloroplast. In Rhodomonas salina (Cryptomonas salina), this protein is Large ribosomal subunit protein bL33c.